Here is a 388-residue protein sequence, read N- to C-terminus: RNA binding motif protein, X-linked-like-1 (388 aa).

The region spanning 8–86 (GKLFIGGLNT…KAIKVEQATK (79 aa)) is the RRM domain. Positions 61–80 (DAKDVARDMNGKSLDGKAIK) are enriched in basic and acidic residues. Residues 61-388 (DAKDVARDMN…SDRGGGQKQI (328 aa)) are disordered. A Glycyl lysine isopeptide (Lys-Gly) (interchain with G-Cter in SUMO2) cross-link involves residue Lys80. Ser88 is modified (phosphoserine). A compositionally biased stretch (pro residues) spans 148 to 161 (RGPPPRSGGPPPKR). Basic and acidic residues-rich tracts occupy residues 191-212 (PRREPLPSRRDVYLSPRDDGYS) and 238-271 (YTYRDYSHSSSRDDYPSRGYGDRDGYGRDREYSD). Positions 320–332 (SRDSYSSSRSDLY) are enriched in low complexity. Composition is skewed to basic and acidic residues over residues 333–344 (SSDRDRVGRQER) and 377–388 (SRSDRGGGQKQI).

It is found in the nucleus. In terms of biological role, RNA-binding protein which may be involved in pre-mRNA splicing. The polypeptide is RNA binding motif protein, X-linked-like-1 (Rbmxl1) (Rattus norvegicus (Rat)).